We begin with the raw amino-acid sequence, 557 residues long: Formate--tetrahydrofolate ligase (557 aa).

Residue 67 to 74 (TPAGEGKS) coordinates ATP.

It belongs to the formate--tetrahydrofolate ligase family.

It catalyses the reaction (6S)-5,6,7,8-tetrahydrofolate + formate + ATP = (6R)-10-formyltetrahydrofolate + ADP + phosphate. It participates in one-carbon metabolism; tetrahydrofolate interconversion. This chain is Formate--tetrahydrofolate ligase, found in Latilactobacillus sakei subsp. sakei (strain 23K) (Lactobacillus sakei subsp. sakei).